The primary structure comprises 216 residues: Ras-related protein RABA1b (216 aa).

Position 20-27 (20-27) interacts with GTP; it reads GDSGVGKS. The Effector region motif lies at 42 to 50; it reads SKSTIGVEF. GTP contacts are provided by residues 68-72, 126-129, and 156-157; these read DTAGQ, NKSD, and SA. S-geranylgeranyl cysteine attachment occurs at residues Cys-213 and Cys-214.

This sequence belongs to the small GTPase superfamily. Rab family.

The protein localises to the cell membrane. Functionally, intracellular vesicle trafficking and protein transport. This Arabidopsis thaliana (Mouse-ear cress) protein is Ras-related protein RABA1b (RABA1B).